A 317-amino-acid polypeptide reads, in one-letter code: Ribosome production factor 2 homolog (317 aa).

The 213-residue stretch at 28–240 (KTAIFLRGNA…IRRVQPAESD (213 aa)) folds into the Brix domain. The tract at residues 287 to 317 (MKGLKRSVEEREDSENEEVEIEEDVISDASE) is disordered. Residues Ser-293, Ser-300, Ser-313, and Ser-316 each carry the phosphoserine modification. The span at 296 to 317 (EREDSENEEVEIEEDVISDASE) shows a compositional bias: acidic residues.

The protein belongs to the RPF2 family. As to quaternary structure, component of a hexameric 5S RNP precursor complex, composed of 5S RNA, rrs1, rpf2, rpl5a/rpl5b, rpl11a/rpl11b and syo1; this complex acts as a precursor for ribosome assembly.

Its subcellular location is the nucleus. The protein resides in the nucleolus. This chain is Ribosome production factor 2 homolog, found in Schizosaccharomyces pombe (strain 972 / ATCC 24843) (Fission yeast).